A 426-amino-acid chain; its full sequence is Glutamate-1-semialdehyde 2,1-aminomutase (426 aa).

Lys265 carries the N6-(pyridoxal phosphate)lysine modification.

This sequence belongs to the class-III pyridoxal-phosphate-dependent aminotransferase family. HemL subfamily. Homodimer. Pyridoxal 5'-phosphate is required as a cofactor.

It localises to the cytoplasm. It carries out the reaction (S)-4-amino-5-oxopentanoate = 5-aminolevulinate. It participates in porphyrin-containing compound metabolism; protoporphyrin-IX biosynthesis; 5-aminolevulinate from L-glutamyl-tRNA(Glu): step 2/2. The protein is Glutamate-1-semialdehyde 2,1-aminomutase of Erwinia tasmaniensis (strain DSM 17950 / CFBP 7177 / CIP 109463 / NCPPB 4357 / Et1/99).